A 343-amino-acid chain; its full sequence is Cytoplasmic tRNA 2-thiolation protein 1 (343 aa).

The protein belongs to the TtcA family. CTU1/NCS6/ATPBD3 subfamily.

It is found in the cytoplasm. Its pathway is tRNA modification; 5-methoxycarbonylmethyl-2-thiouridine-tRNA biosynthesis. Plays a central role in 2-thiolation of mcm(5)S(2)U at tRNA wobble positions of tRNA(Lys), tRNA(Glu) and tRNA(Gln). Directly binds tRNAs and probably acts by catalyzing adenylation of tRNAs, an intermediate required for 2-thiolation. It is unclear whether it acts as a sulfurtransferase that transfers sulfur from thiocarboxylated URM1 onto the uridine of tRNAs at wobble position. In Drosophila yakuba (Fruit fly), this protein is Cytoplasmic tRNA 2-thiolation protein 1.